Here is a 494-residue protein sequence, read N- to C-terminus: Protein transport protein Sec61 subunit alpha (494 aa).

A run of 10 helical transmembrane segments spans residues 36–56, 79–99, 122–142, 147–167, 177–197, 249–269, 294–314, 359–379, 426–446, and 450–470; these read LWTSIVVFLYLVCCQIPLYGI, LMELGISPIVTSGLVMQLLAG, LLGILITIGESVAYVLSGMYG, LGAGNAILIIVQLFTSGIIVI, YGIGSAISLFIATNVCESIVW, LLATVLVFVLVVYFQGFQVEL, MPIILQTALVSNLYFISQILY, IVSDPVHALLYIIFILASCAL, AAFGGMCIGALSIVADFMGAI, and TGILLAVTTIYQSWETILLAV.

It belongs to the SecY/SEC61-alpha family. In terms of assembly, heterotrimeric complex composed of SEC61-alpha, SEC61-beta and SEC61-gamma.

The protein resides in the endoplasmic reticulum membrane. Appears to play a crucial role in the insertion of secretory and membrane polypeptides into the ER. It is required for assembly of membrane and secretory proteins. This chain is Protein transport protein Sec61 subunit alpha, found in Pyrenomonas salina.